We begin with the raw amino-acid sequence, 205 residues long: Cbp/p300-interacting transactivator 3 (205 aa).

This sequence belongs to the CITED family.

It localises to the nucleus. Functionally, acts as a transcriptional coactivator. Enhances estrogen-dependent transactivation mediated by estrogen receptors. This is Cbp/p300-interacting transactivator 3 (CITED3) from Gallus gallus (Chicken).